A 337-amino-acid polypeptide reads, in one-letter code: AP2/ERF and B3 domain-containing transcription factor At1g50680 (337 aa).

The segment at residues Lys27–Pro84 is a DNA-binding region (AP2/ERF). A DNA-binding region (TF-B3) is located at residues Phe157–Asn271.

This sequence belongs to the AP2/ERF transcription factor family. RAV subfamily.

Its subcellular location is the nucleus. Functionally, probably acts as a transcriptional activator. Binds to the GCC-box pathogenesis-related promoter element. May be involved in the regulation of gene expression by stress factors and by components of stress signal transduction pathways. This chain is AP2/ERF and B3 domain-containing transcription factor At1g50680, found in Arabidopsis thaliana (Mouse-ear cress).